Reading from the N-terminus, the 988-residue chain is MPRRSILSAAERESLLALPDSKDDLIRHYTFNDTDLSIIRQRRGPANRLGFAVQLCYLRFPGVILGVDELPFPPLLKPVADQPKVGVESWNEYGQREQTRREHLSELQTVFGFRPFTMSHYRQAVQMLTELAMQTDKGIVLASALIGHLRRQSVILPALNAVERASAEAITRANRRIYDALAEPLADAHRRRLDDLLKRRDNGKTTWLAWLRQSPAKPNSRHMLEHIERLKAWQALDLPTGIERLVHQNRLLKIAREGGQMTPADLAKFEPQRRYATLVALATEGMATVTDEIIDLHDRILGKLFNAAKNKHQQQFQASGKAINAKVRLYGRIGQALIDAKQSGRDAFAAIEAVMSWDSFAESVTEAQKLAQPGGFGFLHRIGESYATLRRYAPEFLAVLKLRAAPAAKNVLDAIEVLRGMNTDNARKLPADAPTGFIKPRWQKLVMTDAGIDRAYYELCALSELKNSLRSGDIWVQGSRQFKDFEDYLVPPEKFTSLKQSSELPLAVATGCEQYLHERLTLLEAQLATVNRMAAANDLPDAIITESGLKITPLDAAVPDTAQALIDQTAMVLPHVKITELLLEVDEWTGFTRHFTHLKSGDLAKDKNLLLTTILADAINLGLTKMAESCPGTTYAKLAWLQAWHTRDETYSTALAELVNAQFRHPFAGHWGDGTTSSSDEQNFRTASKAKSTGHINPKYGSSPGRTFYTHISDQYAPFHTKVVNVGLRDSTYVLDDLLYHESDLRIEEHYTDTAGFTDHVFALMHLLGFRFAPRIRDLGDTKLYIPKGDAAYDALKPMIGGTLNIKHVRAHWDEILRLATSIKQGTVTASLMLRKLGSYPRQNGLAVALRELGRVERTLFILDWLQGVELRRRVHAGLNKGEARNALARAVFFNRLGEIRDRSFEQQRYRASGLNLVTAAIVLWNTVYLERAAHALRGNGHAVDDSLLQYLSPLGWEHINLTGDYLWRSSAKIGAGKFRPLRPLQPA.

Positions 672–696 (GDGTTSSSDEQNFRTASKAKSTGHI) are disordered. A compositionally biased stretch (polar residues) spans 674–695 (GTTSSSDEQNFRTASKAKSTGH).

It belongs to the transposase 7 family.

Functionally, required for transposition of transposon Tn21. This is Transposase for transposon Tn21 (tnpA) from Escherichia coli.